The chain runs to 266 residues: Putative pyruvate, phosphate dikinase regulatory protein (266 aa).

147-154 is a binding site for ADP; that stretch reads GLSRTSKT.

The protein belongs to the pyruvate, phosphate/water dikinase regulatory protein family. PDRP subfamily.

The catalysed reaction is N(tele)-phospho-L-histidyl/L-threonyl-[pyruvate, phosphate dikinase] + ADP = N(tele)-phospho-L-histidyl/O-phospho-L-threonyl-[pyruvate, phosphate dikinase] + AMP + H(+). It catalyses the reaction N(tele)-phospho-L-histidyl/O-phospho-L-threonyl-[pyruvate, phosphate dikinase] + phosphate + H(+) = N(tele)-phospho-L-histidyl/L-threonyl-[pyruvate, phosphate dikinase] + diphosphate. Its function is as follows. Bifunctional serine/threonine kinase and phosphorylase involved in the regulation of the pyruvate, phosphate dikinase (PPDK) by catalyzing its phosphorylation/dephosphorylation. This Clostridium perfringens (strain SM101 / Type A) protein is Putative pyruvate, phosphate dikinase regulatory protein.